A 455-amino-acid polypeptide reads, in one-letter code: Glutamyl-tRNA reductase (455 aa).

Residues 49-52 (TCNR), Ser109, 114-116 (ETQ), and Gln120 each bind substrate. Cys50 functions as the Nucleophile in the catalytic mechanism. 189-194 (GAGKMG) contacts NADP(+).

The protein belongs to the glutamyl-tRNA reductase family. In terms of assembly, homodimer.

It carries out the reaction (S)-4-amino-5-oxopentanoate + tRNA(Glu) + NADP(+) = L-glutamyl-tRNA(Glu) + NADPH + H(+). Its pathway is porphyrin-containing compound metabolism; protoporphyrin-IX biosynthesis; 5-aminolevulinate from L-glutamyl-tRNA(Glu): step 1/2. In terms of biological role, catalyzes the NADPH-dependent reduction of glutamyl-tRNA(Glu) to glutamate 1-semialdehyde (GSA). This is Glutamyl-tRNA reductase from Bacillus velezensis (strain DSM 23117 / BGSC 10A6 / LMG 26770 / FZB42) (Bacillus amyloliquefaciens subsp. plantarum).